Here is a 726-residue protein sequence, read N- to C-terminus: Elongation factor 2 (726 aa).

The tr-type G domain maps to 19–260 (DRIRNIGICA…MVIKHLPSPP (242 aa)). GTP contacts are provided by residues 28–35 (AHIDHGKT), 94–98 (DTPGH), and 148–151 (NKVD). Histidine 602 carries the post-translational modification Diphthamide.

This sequence belongs to the TRAFAC class translation factor GTPase superfamily. Classic translation factor GTPase family. EF-G/EF-2 subfamily.

The protein localises to the cytoplasm. In terms of biological role, catalyzes the GTP-dependent ribosomal translocation step during translation elongation. During this step, the ribosome changes from the pre-translocational (PRE) to the post-translocational (POST) state as the newly formed A-site-bound peptidyl-tRNA and P-site-bound deacylated tRNA move to the P and E sites, respectively. Catalyzes the coordinated movement of the two tRNA molecules, the mRNA and conformational changes in the ribosome. In Methanocaldococcus jannaschii (strain ATCC 43067 / DSM 2661 / JAL-1 / JCM 10045 / NBRC 100440) (Methanococcus jannaschii), this protein is Elongation factor 2 (fusA).